A 223-amino-acid chain; its full sequence is Ribose-5-phosphate isomerase A (223 aa).

Residues 28–31 (TGST), 81–84 (DGAD), and 94–97 (KGGG) contribute to the substrate site. The active-site Proton acceptor is the E103. A substrate-binding site is contributed by K121.

It belongs to the ribose 5-phosphate isomerase family. As to quaternary structure, homodimer.

It carries out the reaction aldehydo-D-ribose 5-phosphate = D-ribulose 5-phosphate. It functions in the pathway carbohydrate degradation; pentose phosphate pathway; D-ribose 5-phosphate from D-ribulose 5-phosphate (non-oxidative stage): step 1/1. Its function is as follows. Catalyzes the reversible conversion of ribose-5-phosphate to ribulose 5-phosphate. The chain is Ribose-5-phosphate isomerase A from Ruthia magnifica subsp. Calyptogena magnifica.